A 607-amino-acid polypeptide reads, in one-letter code: Ceramide kinase (607 aa).

Positions 135–358 (DRPKSLMVFV…LDIAQVVRWK (224 aa)) constitute a DAGKc domain. Residues 145 to 149 (HPLCG), threonine 176, and 205 to 211 (GDGLFNE) contribute to the ATP site. 204-207 (GGDG) contacts substrate. The Proton donor/acceptor role is filled by aspartate 206. The tract at residues 247 to 297 (NDLSNSELTGDDANAISGSSNTPDDHEPLLSTTRSTGLDISSSDSSDEPCN) is disordered. Positions 276-286 (LSTTRSTGLDI) are enriched in polar residues. Serine 320 lines the ATP pocket. Positions 454–461 (CRTNCLIC) match the CXXXCXXC motif.

The cofactor is Ca(2+). It depends on Mg(2+) as a cofactor. As to expression, highly expressed in leaves and at lower levels in stems.

It catalyses the reaction an N-acylsphing-4-enine + ATP = an N-acylsphing-4-enine 1-phosphate + ADP + H(+). Functionally, catalyzes specifically the phosphorylation of ceramide to form ceramide 1-phosphate. Possesses activity on ceramide analog (C6 synthetic ceramide) in vitro. Ceramide is a critical sphingolipid metabolite that induces programmed cell death (PCD) in plants and ceramide-1-phosphate has a PCD suppressive effect. Thus, ceramide phosphorylation plays a role in the modulation of PCD and CERK activity is crucial for the maintenance of cell viability. This is Ceramide kinase (CERK) from Oryza sativa subsp. japonica (Rice).